A 279-amino-acid chain; its full sequence is Orotidine 5'-phosphate decarboxylase (279 aa).

Substrate contacts are provided by residues Asp-8, Lys-30, 58 to 67 (DLKFHDIPNT), Thr-117, Arg-177, Gln-186, Gly-206, and Arg-207. Lys-60 functions as the Proton donor in the catalytic mechanism.

The protein belongs to the OMP decarboxylase family. Type 1 subfamily. In terms of assembly, homodimer.

It carries out the reaction orotidine 5'-phosphate + H(+) = UMP + CO2. It functions in the pathway pyrimidine metabolism; UMP biosynthesis via de novo pathway; UMP from orotate: step 2/2. In terms of biological role, catalyzes the decarboxylation of orotidine 5'-monophosphate (OMP) to uridine 5'-monophosphate (UMP). In Campylobacter jejuni subsp. jejuni serotype O:2 (strain ATCC 700819 / NCTC 11168), this protein is Orotidine 5'-phosphate decarboxylase.